Reading from the N-terminus, the 1098-residue chain is MALIVASLFLPYQPQFELDTSLPENSQVDSSLVNIQAMANDQQQQRALSNNISQESLVAPAPEQGVPPAISRSATRSPSAFNRASSTTNTATLDDLVSSDIFMENLTANATTSHTPTSKTMLKPRKNGSVERFFSPSSNIPTDRIASPIQHEHDSGSRIASPIQQQQQDPTTNLLKNVNKSLLVHSLLNNTSQTSLEGPNNHIVTPKSRAGNRPTSAATSLVNRTKQGSASSGSSGSSAPPSIKRITPHLTASAAKQRPLLAKQPSNLKYSELADISSSETSSQHNESDPDDLTTAPDEEYVSDLEMDDAKQDYKVPKFGGYSNKSKLKKYALLRSSQELFSRLPWSIVPSIKGNGAMKNAINTAVLENIIPHRHVKWVGTVGIPTDEIPENILANISDSLKDKYDSYPVLTDDDTFKAAYKNYCKQILWPTLHYQIPDNPNSKAFEDHSWKFYRNLNQRFADAIVKIYKKGDTIWIHDYHLMLVPQMVRDVLPFAKIGFTLHVSFPSSEVFRCLAQREKILEGLTGADFVGFQTREYARHFLQTSNRLLMADVVHDEELKYNGRVVSVRFTPVGIDAFDLQSQLKDGSVMQWRQLIRERWQGKKLIVCRDQFDRIRGIHKKLLAYEKFLVENPEYVEKSTLIQICIGSSKDVELERQIMIVVDRINSLSTNISISQPVVFLHQDLDFSQYLALSSEADLFVVSSLREGMNLTCHEFIVCSEDKNAPLLLSEFTGSASLLNDGAIIINPWDTKNFSQAILKGLEMPFDKRRPQWKKLMKDIINNDSTNWIKTSLQDIHISWQFNQEGSKIFKLNTKTLMEDYQSSKKRMFVFNIAEPPSSRMISILNDMTSKGNIVYIMNSFPKPILENLYSRVQNIGLIAENGAYVSLNGVWYNIVDQVDWRNDVAKILEDKVERLPGSYYKINESMIKFHTENAEDQDRVASVIGDAITHINTVFDHRGIHAYVYKNVVSVQQVGLSLSAAQFLFRFYNSASDPLDTSSGQITNIQTPSQQNPSDQEQQPPASPTVSMNHIDFACVSGSSSPVLEPLFKLVNDEASEGQVKAGHAIVYGDATSTYAKEHVNGLNELFTIISRIIED.

Phosphoserine occurs at positions 49, 53, 56, 71, 77, 135, 147, and 161. Disordered regions lie at residues 59–86 (APAP…RASS), 129–168 (SVER…QQQQ), and 192–244 (SQTS…PSIK). Residues 72-86 (RSATRSPSAFNRASS) show a composition bias toward polar residues. Repeat copies occupy residues 144–150 (RIASPIQ) and 158–164 (RIASPIQ). A 2 X 7 AA repeats of R-I-A-S-P-I-Q region spans residues 144 to 164 (RIASPIQHEHDSGSRIASPIQ). A compositionally biased stretch (polar residues) spans 213–227 (RPTSAATSLVNRTKQ). Positions 228–242 (GSASSGSSGSSAPPS) are enriched in low complexity. Residue Ser229 is modified to Phosphoserine. Position 251 is a phosphothreonine (Thr251). The segment at 274–297 (ADISSSETSSQHNESDPDDLTTAP) is disordered. Ser303 carries the phosphoserine modification. The segment at 320–812 (GGYSNKSKLK…FNQEGSKIFK (493 aa)) is TPS complex domain. Thr815 is subject to Phosphothreonine. The disordered stretch occupies residues 1000–1027 (SSGQITNIQTPSQQNPSDQEQQPPASPT).

This sequence in the C-terminal section; belongs to the glycosyltransferase 20 family. The trehalose synthase complex is composed of the two catalytic subunits TPS1 and TPS2, and at least one of the two regulatory subunits TPS3 or TSL1.

Its subcellular location is the cytoplasm. In terms of biological role, regulatory subunit of the trehalose synthase complex that catalyzes the production of trehalose from glucose-6-phosphate and UDP-glucose in a two step process. May stabilize the trehalose synthase complex, and confer sensitivity to physiological concentrations of phosphate and to fructose 6-phosphate. In Saccharomyces cerevisiae (strain ATCC 204508 / S288c) (Baker's yeast), this protein is Trehalose synthase complex regulatory subunit TSL1 (TSL1).